We begin with the raw amino-acid sequence, 100 residues long: Urease subunit gamma (100 aa).

Belongs to the urease gamma subunit family. Heterotrimer of UreA (gamma), UreB (beta) and UreC (alpha) subunits. Three heterotrimers associate to form the active enzyme.

It localises to the cytoplasm. The enzyme catalyses urea + 2 H2O + H(+) = hydrogencarbonate + 2 NH4(+). It participates in nitrogen metabolism; urea degradation; CO(2) and NH(3) from urea (urease route): step 1/1. The polypeptide is Urease subunit gamma (Pseudomonas putida (strain ATCC 700007 / DSM 6899 / JCM 31910 / BCRC 17059 / LMG 24140 / F1)).